A 255-amino-acid chain; its full sequence is Thiazole synthase (255 aa).

Lys95 acts as the Schiff-base intermediate with DXP in catalysis. 1-deoxy-D-xylulose 5-phosphate contacts are provided by residues Gly156, 182–183 (AG), and 204–205 (NT).

Belongs to the ThiG family. In terms of assembly, homotetramer. Forms heterodimers with either ThiH or ThiS.

Its subcellular location is the cytoplasm. The catalysed reaction is [ThiS sulfur-carrier protein]-C-terminal-Gly-aminoethanethioate + 2-iminoacetate + 1-deoxy-D-xylulose 5-phosphate = [ThiS sulfur-carrier protein]-C-terminal Gly-Gly + 2-[(2R,5Z)-2-carboxy-4-methylthiazol-5(2H)-ylidene]ethyl phosphate + 2 H2O + H(+). It functions in the pathway cofactor biosynthesis; thiamine diphosphate biosynthesis. Its function is as follows. Catalyzes the rearrangement of 1-deoxy-D-xylulose 5-phosphate (DXP) to produce the thiazole phosphate moiety of thiamine. Sulfur is provided by the thiocarboxylate moiety of the carrier protein ThiS. In vitro, sulfur can be provided by H(2)S. This chain is Thiazole synthase, found in Photorhabdus laumondii subsp. laumondii (strain DSM 15139 / CIP 105565 / TT01) (Photorhabdus luminescens subsp. laumondii).